The sequence spans 95 residues: Co-chaperonin GroES (95 aa).

Belongs to the GroES chaperonin family. As to quaternary structure, heptamer of 7 subunits arranged in a ring. Interacts with the chaperonin GroEL.

Its subcellular location is the cytoplasm. In terms of biological role, together with the chaperonin GroEL, plays an essential role in assisting protein folding. The GroEL-GroES system forms a nano-cage that allows encapsulation of the non-native substrate proteins and provides a physical environment optimized to promote and accelerate protein folding. GroES binds to the apical surface of the GroEL ring, thereby capping the opening of the GroEL channel. This Pelodictyon phaeoclathratiforme (strain DSM 5477 / BU-1) protein is Co-chaperonin GroES.